Reading from the N-terminus, the 71-residue chain is Large ribosomal subunit protein bL31 (71 aa).

It belongs to the bacterial ribosomal protein bL31 family. Type A subfamily. As to quaternary structure, part of the 50S ribosomal subunit.

In terms of biological role, binds the 23S rRNA. The polypeptide is Large ribosomal subunit protein bL31 (rpmE) (Mycoplasmopsis synoviae (strain 53) (Mycoplasma synoviae)).